A 644-amino-acid chain; its full sequence is Exoribonuclease 2 (644 aa).

Positions 189–516 (RQDLTALNFV…NHRLLKAVIK (328 aa)) constitute an RNB domain. An S1 motif domain is found at 561–643 (NTRFAAEIID…ETRSIIARPA (83 aa)).

This sequence belongs to the RNR ribonuclease family. RNase II subfamily.

The protein resides in the cytoplasm. It catalyses the reaction Exonucleolytic cleavage in the 3'- to 5'-direction to yield nucleoside 5'-phosphates.. Its function is as follows. Involved in mRNA degradation. Hydrolyzes single-stranded polyribonucleotides processively in the 3' to 5' direction. The chain is Exoribonuclease 2 from Salmonella typhi.